Reading from the N-terminus, the 271-residue chain is Co-chaperone protein DjlA (271 aa).

Residues 1–6 (MQYWGK) lie on the Periplasmic side of the membrane. The helical transmembrane segment at 7–31 (IIGVAVALLMGGGFWGVVLGLLIGH) threads the bilayer. At 32-271 (MFDKARSRKM…ELIKQQKGFK (240 aa)) the chain is on the cytoplasmic side. The J domain maps to 205–271 (DACNVLGVKP…ELIKQQKGFK (67 aa)).

In terms of assembly, homodimer.

It is found in the cell inner membrane. Regulatory DnaK co-chaperone. Direct interaction between DnaK and DjlA is needed for the induction of the wcaABCDE operon, involved in the synthesis of a colanic acid polysaccharide capsule, possibly through activation of the RcsB/RcsC phosphotransfer signaling pathway. The colanic acid capsule may help the bacterium survive conditions outside the host. This is Co-chaperone protein DjlA from Escherichia coli (strain K12).